A 324-amino-acid polypeptide reads, in one-letter code: D-alanine--D-alanine ligase (324 aa).

Residues 112 to 312 (KAVLAAAGVT…FDQLVLWIVE (201 aa)) enclose the ATP-grasp domain. 139 to 193 (LQPPYVVKPNAEGSSVGVFIIKEGANRPPEEVGAPSWTFGEEVMVEPYIQGMELA) is a binding site for ATP. 3 residues coordinate Mg(2+): Asp-265, Glu-279, and Asn-281.

It belongs to the D-alanine--D-alanine ligase family. Requires Mg(2+) as cofactor. The cofactor is Mn(2+).

The protein resides in the cytoplasm. The enzyme catalyses 2 D-alanine + ATP = D-alanyl-D-alanine + ADP + phosphate + H(+). The protein operates within cell wall biogenesis; peptidoglycan biosynthesis. Functionally, cell wall formation. This Caulobacter vibrioides (strain ATCC 19089 / CIP 103742 / CB 15) (Caulobacter crescentus) protein is D-alanine--D-alanine ligase.